A 180-amino-acid polypeptide reads, in one-letter code: Ribosome maturation factor RimM (180 aa).

A PRC barrel domain is found at 104–177; sequence EGEFHLLDLV…WLLLTPPPGL (74 aa).

This sequence belongs to the RimM family. In terms of assembly, binds ribosomal protein uS19.

It is found in the cytoplasm. An accessory protein needed during the final step in the assembly of 30S ribosomal subunit, possibly for assembly of the head region. Essential for efficient processing of 16S rRNA. May be needed both before and after RbfA during the maturation of 16S rRNA. It has affinity for free ribosomal 30S subunits but not for 70S ribosomes. This chain is Ribosome maturation factor RimM, found in Synechococcus sp. (strain CC9902).